We begin with the raw amino-acid sequence, 442 residues long: Tyrosine-protein kinase transforming protein RYK (442 aa).

The Protein kinase domain occupies Leu-45–Leu-316. ATP-binding positions include Leu-51–Val-59 and Lys-77. Asp-181 functions as the Proton acceptor in the catalytic mechanism. Tyr-212 is subject to Phosphotyrosine; by autocatalysis.

Belongs to the protein kinase superfamily. Tyr protein kinase family. AXL/UFO subfamily.

It localises to the host cell membrane. It carries out the reaction L-tyrosyl-[protein] + ATP = O-phospho-L-tyrosyl-[protein] + ADP + H(+). This Avian retrovirus RPL30 protein is Tyrosine-protein kinase transforming protein RYK (V-RYK).